We begin with the raw amino-acid sequence, 332 residues long: Decaprenyl-phosphate phosphoribosyltransferase (332 aa).

Basic and acidic residues predominate over residues 1-12; that stretch reads MSEHAAEHHRDT. The tract at residues 1-36 is disordered; it reads MSEHAAEHHRDTQNFLTSEPHTTAIEDNKKRQPPKN. Transmembrane regions (helical) follow at residues 50-70 and 74-94; these read WVKNVLVLAAPLAAGADAIFN and IIDVAIAFVVFCFGASAIYLV. Residues K52 and Y92 each coordinate 5-phospho-alpha-D-ribose 1-diphosphate. Mg(2+) contacts are provided by N95 and D99. Residue K109 participates in 5-phospho-alpha-D-ribose 1-diphosphate binding. Helical transmembrane passes span 114–134 and 146–166; these read IAAGVLPVGMAYGMAVALIAL and VALACVIGVYIALQLGYCFGW. K167 and R184 together coordinate 5-phospho-alpha-D-ribose 1-diphosphate. A run of 2 helical transmembrane segments spans residues 169-189 and 190-210; these read MPVIDIALVSSGFMLRAMAGG and VAAGIELSQWFLLVAAFGSLF. Trans,octa-cis-decaprenyl phosphate is bound at residue K215. 3 helical membrane passes run 244 to 264, 273 to 293, and 310 to 330; these read FVWTMAATAVVMSYALWGFDL, PWYQISMVPFTIAILRYAAGV, and VLQVLALAWVFCIVMAVYIMP.

The protein belongs to the UbiA prenyltransferase family. DPPR synthase subfamily. Requires Mg(2+) as cofactor.

It localises to the cell inner membrane. The catalysed reaction is trans,octa-cis-decaprenyl phosphate + 5-phospho-alpha-D-ribose 1-diphosphate + H(+) = trans,octa-cis-decaprenylphospho-beta-D-ribofuranose 5-phosphate + diphosphate. It functions in the pathway cell wall biogenesis; cell wall polysaccharide biosynthesis. Its function is as follows. Involved in the biosynthesis of decaprenylphosphoryl arabinose (DPA) a precursor for arabinan synthesis in mycobacterial cell wall biosynthesis. Catalyzes the transfer of a 5-phosphoribosyl residue from phosphoribose diphosphate (PRPP) to decaprenyl phosphate (DP) to form decaprenylphosphoryl-5-phosphoribose (DPPR). The polypeptide is Decaprenyl-phosphate phosphoribosyltransferase (Corynebacterium glutamicum (strain ATCC 13032 / DSM 20300 / JCM 1318 / BCRC 11384 / CCUG 27702 / LMG 3730 / NBRC 12168 / NCIMB 10025 / NRRL B-2784 / 534)).